A 240-amino-acid polypeptide reads, in one-letter code: Homeobox protein DLX-4 (240 aa).

Residues 80-120 (QPLCGPAEHPQELEADSEKPRLSPEPSERRPQAPAKKLRKP) form a disordered region. The segment covering 88–110 (HPQELEADSEKPRLSPEPSERRP) has biased composition (basic and acidic residues). The homeobox DNA-binding region spans 117–176 (LRKPRTIYSSLQLQHLNQRFQHTQYLALPERAQLAAQLGLTQTQVKIWFQNKRSKYKKLL).

This sequence belongs to the distal-less homeobox family. Expressed in leukemia cells and placenta. Also expressed in kidney and fetal liver.

It is found in the nucleus. In terms of biological role, may play a role in determining the production of hemoglobin S. May act as a repressor. During embryonic development, plays a role in palatogenesis. This chain is Homeobox protein DLX-4 (DLX4), found in Homo sapiens (Human).